We begin with the raw amino-acid sequence, 332 residues long: Aspartate carbamoyltransferase catalytic subunit (332 aa).

Carbamoyl phosphate-binding residues include Arg54 and Thr55. Lys82 contributes to the L-aspartate binding site. 3 residues coordinate carbamoyl phosphate: Arg104, His134, and Gln137. Arg175 and Arg230 together coordinate L-aspartate. Residues Gly271 and Pro272 each contribute to the carbamoyl phosphate site. The interval 312–332 (GGPDGDSTTSPGSGPEGGTTP) is disordered.

It belongs to the aspartate/ornithine carbamoyltransferase superfamily. ATCase family. As to quaternary structure, heterododecamer (2C3:3R2) of six catalytic PyrB chains organized as two trimers (C3), and six regulatory PyrI chains organized as three dimers (R2).

It catalyses the reaction carbamoyl phosphate + L-aspartate = N-carbamoyl-L-aspartate + phosphate + H(+). Its pathway is pyrimidine metabolism; UMP biosynthesis via de novo pathway; (S)-dihydroorotate from bicarbonate: step 2/3. In terms of biological role, catalyzes the condensation of carbamoyl phosphate and aspartate to form carbamoyl aspartate and inorganic phosphate, the committed step in the de novo pyrimidine nucleotide biosynthesis pathway. The polypeptide is Aspartate carbamoyltransferase catalytic subunit (Beutenbergia cavernae (strain ATCC BAA-8 / DSM 12333 / CCUG 43141 / JCM 11478 / NBRC 16432 / NCIMB 13614 / HKI 0122)).